The primary structure comprises 468 residues: 6-phospho-beta-galactosidase (468 aa).

The D-galactose 6-phosphate site is built by Gln-19, His-116, Asn-159, Glu-160, and Asn-297. Glu-160 serves as the catalytic Proton donor. Catalysis depends on Glu-375, which acts as the Nucleophile. Positions 428, 429, 435, and 437 each coordinate D-galactose 6-phosphate.

The protein belongs to the glycosyl hydrolase 1 family.

It carries out the reaction a 6-phospho-beta-D-galactoside + H2O = D-galactose 6-phosphate + an alcohol. Its pathway is carbohydrate metabolism; lactose degradation; D-galactose 6-phosphate and beta-D-glucose from lactose 6-phosphate: step 1/1. This Streptococcus pyogenes serotype M12 (strain MGAS2096) protein is 6-phospho-beta-galactosidase.